Here is a 251-residue protein sequence, read N- to C-terminus: MGDSNFDDVLVLIPARMASTRLPGKPLADICGLPMIVQVAMRAKEAEIGRVVVAVDDPQVFDTVAAAGFEVVMTSKDHQSGSDRIFEALKKIDPDGKAKFIVNVQGDLPTIEPETVRAALRPLENEAVDIGTLTIEIDNEEDKTAPHIVKVIGSPISDNRLRGLYFTRATAPYGKGPLYHHIGLYAYRRAALERFVSLGPSTLERRESLEQLRALEAGMRIDAEIVDTVPLGVDTPADLEKARRILSARQN.

The protein belongs to the KdsB family.

The protein localises to the cytoplasm. It carries out the reaction 3-deoxy-alpha-D-manno-oct-2-ulosonate + CTP = CMP-3-deoxy-beta-D-manno-octulosonate + diphosphate. Its pathway is nucleotide-sugar biosynthesis; CMP-3-deoxy-D-manno-octulosonate biosynthesis; CMP-3-deoxy-D-manno-octulosonate from 3-deoxy-D-manno-octulosonate and CTP: step 1/1. The protein operates within bacterial outer membrane biogenesis; lipopolysaccharide biosynthesis. Activates KDO (a required 8-carbon sugar) for incorporation into bacterial lipopolysaccharide in Gram-negative bacteria. The chain is 3-deoxy-manno-octulosonate cytidylyltransferase from Rhizobium etli (strain ATCC 51251 / DSM 11541 / JCM 21823 / NBRC 15573 / CFN 42).